Consider the following 688-residue polypeptide: UvrABC system protein C (688 aa).

The region spanning 11-90 (LTPGVYLYKD…IKKHRPRYNI (80 aa)) is the GIY-YIG domain. The 36-residue stretch at 200-235 (GELVDALRTEMEAASQGLDFERAAVLRDRIRALERT) folds into the UVR domain.

The protein belongs to the UvrC family. As to quaternary structure, interacts with UvrB in an incision complex.

It is found in the cytoplasm. The UvrABC repair system catalyzes the recognition and processing of DNA lesions. UvrC both incises the 5' and 3' sides of the lesion. The N-terminal half is responsible for the 3' incision and the C-terminal half is responsible for the 5' incision. The chain is UvrABC system protein C from Nitratidesulfovibrio vulgaris (strain ATCC 29579 / DSM 644 / CCUG 34227 / NCIMB 8303 / VKM B-1760 / Hildenborough) (Desulfovibrio vulgaris).